The primary structure comprises 274 residues: DegV domain-containing protein Cgl2349/cg2579 (274 aa).

A DegV domain is found at 3-259 (VRVIVDSSAC…PGAVSVSAVF (257 aa)). Residues Thr-39 and Ser-73 each coordinate hexadecanoate.

Monomer.

Its function is as follows. Binds long-chain fatty acids, such as palmitate, and may play a role in lipid transport or fatty acid metabolism. The sequence is that of DegV domain-containing protein Cgl2349/cg2579 from Corynebacterium glutamicum (strain ATCC 13032 / DSM 20300 / JCM 1318 / BCRC 11384 / CCUG 27702 / LMG 3730 / NBRC 12168 / NCIMB 10025 / NRRL B-2784 / 534).